A 981-amino-acid chain; its full sequence is MDSEPSSGTSVSTTASSTTTTTITTSSSRMQQPQISVYSGSDRHAVQVIQQALHRPPSSAAQYLQQMYAAQQQHLMLHTAALQQQHLSSSQLQSLAAVQASLSSGRPSTSPTGSVTQQSSMSQTSILSASPAPAQLMNRSQTSSSTSGSITQQTMLLGSTSPTLTASQAQMYLRAQMLIFTPATTVAAVQSDIPVVSSSPSPSCQSAAAQVQNLTLRSQKLGVLSSSQNGSPKSAGQTQSLTICHNKTTVTSSKISQRDPSPESKKGGSPGLESRSTAVTRTSSIHQLIAPASYSPIQPHSLIKHQQIPLHSPPPKVSHHQLLLQQQQQQIQPITLQSPSQDPPPSQHCIPLPNHGLSPAPSNAQPQHCSPVQSHPPPLTVSPNQAQSAQQSVVVSPPPPHSPSQSPTIIIHPQALIQPHPLVSSALQTGPNLQQAAADQVQSTAQLNLPSHLPLPASPVVHIGPVQQSALVSPGQQMVSPTSHQQYSALQSSPIPIATPPQMSASPPAQLPPLPLQSMQSLQVQPEILSQGQVLVQNALVSEEELPAAEALVQLPFQTLPPPQTVAVNLQVQPPAPVDPPVVYQVEDVCEEEMPEESDECARMDRTPPPPTLSPAAVTVGRGEDLTSEHPLLEQVELPAVASVSASVIKSPSDPTHASAPAPPLLIPAASTRSSSTSLASSTPSLENKPPQAIVKPQILTHVIEGFVIQEGLEPFPVSRSSLLIEQPVKKRPLLDNQVVNSVCVQPELQNNTKHADNSSDTEIEDMMAEETLEEMDSELLKCEFCGKMGYPNEFLRSKRFCTMSCAKRYNVSCSKKFALSRWNRKPDNQSLGHRGRRPSGPEGAAREHILRQLPITYPSAEEDVASHEDPVPSAMTTRLRRQSERERERELRDVRIRKMPENSDLLPVAQTEPSIWTVDDVWAFIHSLPGCQDVADEFRAQEIDGQALLLLKEDHLMSAMNMKLGPALKICARINSLKDS.

Over residues Met-1–Ser-28 the composition is skewed to low complexity. 4 disordered regions span residues Met-1 to Pro-33, Leu-102 to Leu-127, Leu-224 to Thr-280, and Gln-307 to Pro-407. A compositionally biased stretch (polar residues) spans Leu-224–Ile-255. Ser-231, Ser-261, Ser-269, and Ser-312 each carry phosphoserine. Residues Ser-256 to Lys-266 show a composition bias toward basic and acidic residues. Low complexity predominate over residues Gln-321–Ser-340. Residues Ala-360–Gln-373 are compositionally biased toward polar residues. Low complexity predominate over residues Val-381–Val-395. Phosphothreonine is present on residues Thr-607 and Thr-612. At Ser-614 the chain carries Phosphoserine. The interval Lys-650–Pro-690 is disordered. Over residues Ile-667 to Leu-686 the composition is skewed to low complexity. Residues Lys-689 and Lys-730 each participate in a glycyl lysine isopeptide (Lys-Gly) (interchain with G-Cter in SUMO2) cross-link. The HD1 motif lies at Lys-689–Val-718. 2 positions are modified to phosphoserine: Ser-759 and Ser-760. An FCS-type zinc finger spans residues Glu-774–Lys-808. Positions 783, 786, 802, and 806 each coordinate Zn(2+). Residue Lys-808 forms a Glycyl lysine isopeptide (Lys-Gly) (interchain with G-Cter in SUMO2) linkage. 2 disordered regions span residues Arg-825–Gly-844 and Glu-863–Arg-888. The SAM domain occupies Trp-917 to Ser-981.

Component of a PRC1-like complex. Ubiquitous expression.

The protein resides in the nucleus. Its function is as follows. Component of a Polycomb group (PcG) multiprotein PRC1-like complex, a complex class required to maintain the transcriptionally repressive state of many genes, including Hox genes, throughout development. PcG PRC1 complex acts via chromatin remodeling and modification of histones; it mediates monoubiquitination of histone H2A 'Lys-119', rendering chromatin heritably changed in its expressibility. This is Polyhomeotic-like protein 3 (Phc3) from Mus musculus (Mouse).